The following is an 802-amino-acid chain: Valine--tRNA ligase (802 aa).

A 'HIGH' region motif is present at residues 45–55 (PTISGQLHIGH). Positions 524 to 528 (KMSKS) match the 'KMSKS' region motif. Lys-527 contacts ATP.

It belongs to the class-I aminoacyl-tRNA synthetase family. ValS type 2 subfamily. In terms of assembly, monomer.

It localises to the cytoplasm. The enzyme catalyses tRNA(Val) + L-valine + ATP = L-valyl-tRNA(Val) + AMP + diphosphate. Functionally, catalyzes the attachment of valine to tRNA(Val). As ValRS can inadvertently accommodate and process structurally similar amino acids such as threonine, to avoid such errors, it has a 'posttransfer' editing activity that hydrolyzes mischarged Thr-tRNA(Val) in a tRNA-dependent manner. The protein is Valine--tRNA ligase of Ehrlichia canis (strain Jake).